The primary structure comprises 219 residues: uncharacterized protein (219 aa).

The HD domain maps to 57–158; the sequence is QLEHMTRAAM…LSEASRQTLL (102 aa).

This is an uncharacterized protein from Acanthamoeba polyphaga mimivirus (APMV).